We begin with the raw amino-acid sequence, 689 residues long: Glycine--tRNA ligase beta subunit (689 aa).

This sequence belongs to the class-II aminoacyl-tRNA synthetase family. Tetramer of two alpha and two beta subunits.

Its subcellular location is the cytoplasm. It catalyses the reaction tRNA(Gly) + glycine + ATP = glycyl-tRNA(Gly) + AMP + diphosphate. The polypeptide is Glycine--tRNA ligase beta subunit (Shewanella baltica (strain OS223)).